The sequence spans 92 residues: Large ribosomal subunit protein bL27 (92 aa).

A propeptide spanning residues 1-9 is cleaved from the precursor; it reads MIKANLQLF.

This sequence belongs to the bacterial ribosomal protein bL27 family. The N-terminus is cleaved by ribosomal processing cysteine protease Prp.

The protein is Large ribosomal subunit protein bL27 of Acetivibrio thermocellus (strain ATCC 27405 / DSM 1237 / JCM 9322 / NBRC 103400 / NCIMB 10682 / NRRL B-4536 / VPI 7372) (Clostridium thermocellum).